The primary structure comprises 1379 residues: Hepatocyte growth factor receptor (1379 aa).

The N-terminal stretch at 1–24 (MKAPTVLAPGILVLLLSLVQRSHG) is a signal peptide. At 25–931 (ECKEALVKSE…VIVQPDQNFA (907 aa)) the chain is on the extracellular side. A Sema domain is found at 27-514 (KEALVKSEMN…TGKKITKIPL (488 aa)). An N-linked (GlcNAc...) asparagine glycan is attached at Asn-45. Cystine bridges form between Cys-95-Cys-101, Cys-98-Cys-160, Cys-133-Cys-141, and Cys-171-Cys-174. Asn-106 is a glycosylation site (N-linked (GlcNAc...) asparagine). N-linked (GlcNAc...) asparagine glycosylation is found at Asn-201 and Asn-357. Disulfide bonds link Cys-297–Cys-362 and Cys-384–Cys-396. 2 N-linked (GlcNAc...) asparagine glycosylation sites follow: Asn-398 and Asn-404. 4 cysteine pairs are disulfide-bonded: Cys-519-Cys-537, Cys-525-Cys-560, Cys-528-Cys-544, and Cys-540-Cys-550. IPT/TIG domains are found at residues 562–654 (PAVY…FSYV), 656–738 (PVIT…FSYR), and 741–835 (PVVY…LTYV). Residue Thr-581 is glycosylated (O-linked (Man) threonine). N-linked (GlcNAc...) asparagine glycans are attached at residues Asn-606 and Asn-634. Thr-675 and Thr-760 each carry an O-linked (Man) threonine glycan. Asn-784 and Asn-878 each carry an N-linked (GlcNAc...) asparagine glycan. Residues 932-954 (GLIIGAVSISVVVLLLSGLFLWM) traverse the membrane as a helical segment. The Cytoplasmic portion of the chain corresponds to 955–1379 (RKRKHKDLGS…QDNIDGEGNT (425 aa)). Residue Ser-964 is modified to Phosphoserine. Thr-975 bears the Phosphothreonine mark. A phosphoserine mark is found at Ser-988, Ser-995, and Ser-998. The residue at position 1001 (Tyr-1001) is a Phosphotyrosine. The region spanning 1076–1343 (VHFNEVIGRG…RISSIFSTFI (268 aa)) is the Protein kinase domain. ATP contacts are provided by residues 1082–1090 (IGRGHFGCV) and Lys-1108. Catalysis depends on Asp-1202, which acts as the Proton acceptor. The interaction with RANBP9 stretch occupies residues 1210–1379 (LDEKFTVKVA…QDNIDGEGNT (170 aa)). Position 1228 is a phosphotyrosine (Tyr-1228). Tyr-1232 and Tyr-1233 each carry phosphotyrosine; by autocatalysis. Residue Thr-1287 is modified to Phosphothreonine. Residues 1318–1357 (WHPKAEMRPSFSELVSRISSIFSTFIGEHYVHVNATYVNV) form an interaction with MUC20 region. Phosphotyrosine; by autocatalysis is present on residues Tyr-1347 and Tyr-1354. Tyr-1363 is subject to Phosphotyrosine.

This sequence belongs to the protein kinase superfamily. Tyr protein kinase family. In terms of assembly, heterodimer made of an alpha chain (50 kDa) and a beta chain (145 kDa) which are disulfide linked. Binds PLXNB1. Interacts when phosphorylated with downstream effectors including STAT3, PIK3R1, SRC, PCLG1, GRB2 and GAB1. When phosphorylated at Tyr-1354, interacts with INPPL1/SHIP2. Interacts with RANBP9 and RANBP10. Interacts with INPP5D/SHIP1. Interacts with SPSB1, SPSB2, SPSB4 and probably SPSB3. SPSB1 binding occurs in the presence and in the absence of HGF, however HGF treatment has a positive effect on this interaction. Interacts with MUC20; prevents interaction with GRB2 and suppresses hepatocyte growth factor-induced cell proliferation. Interacts with GRB10. Interacts with PTPN1 and PTPN2. Interacts with HSP90AA1 and HSP90AB1; the interaction suppresses MET kinase activity. Interacts with tensin TNS3. Interacts (when phosphorylated) with tensin TNS4 (via SH2 domain); the interaction increases MET protein stability by inhibiting MET endocytosis and subsequent lysosomal degradation. (Microbial infection) Interacts with L.monocytogenes InlB. InlB probably dimerizes upon binding to MET, which encourages subsequent dimerization of MET. Post-translationally, autophosphorylated in response to ligand binding on Tyr-1232 and Tyr-1233 in the kinase domain leading to further phosphorylation of Tyr-1347 and Tyr-1354 in the C-terminal multifunctional docking site. Dephosphorylated by PTPRJ at Tyr-1347 and Tyr-1363. Dephosphorylated by PTPN1 and PTPN2. In terms of processing, ubiquitinated. Ubiquitination by CBL regulates MET endocytosis, resulting in decreasing plasma membrane receptor abundance, and in endosomal degradation and/or recycling of internalized receptors. O-mannosylation of IPT/TIG domains by TMEM260 is required for protein maturation. O-mannosylated residues are composed of single mannose glycans that are not elongated or modified. Post-translationally, (Microbial infection) Tyrosine phosphorylation is stimulated by L.monocytogenes InlB.

It is found in the membrane. It carries out the reaction L-tyrosyl-[protein] + ATP = O-phospho-L-tyrosyl-[protein] + ADP + H(+). With respect to regulation, in its inactive state, the C-terminal tail interacts with the catalytic domain and inhibits the kinase activity. Upon ligand binding, the C-terminal tail is displaced and becomes phosphorylated, thus increasing the kinase activity. In terms of biological role, receptor tyrosine kinase that transduces signals from the extracellular matrix into the cytoplasm by binding to hepatocyte growth factor/HGF ligand. Regulates many physiological processes including proliferation, scattering, morphogenesis and survival. Ligand binding at the cell surface induces autophosphorylation of MET on its intracellular domain that provides docking sites for downstream signaling molecules. Following activation by ligand, interacts with the PI3-kinase subunit PIK3R1, PLCG1, SRC, GRB2, STAT3 or the adapter GAB1. Recruitment of these downstream effectors by MET leads to the activation of several signaling cascades including the RAS-ERK, PI3 kinase-AKT, or PLCgamma-PKC. The RAS-ERK activation is associated with the morphogenetic effects while PI3K/AKT coordinates prosurvival effects. During embryonic development, MET signaling plays a role in gastrulation, development and migration of neuronal precursors, angiogenesis and kidney formation. During skeletal muscle development, it is crucial for the migration of muscle progenitor cells and for the proliferation of secondary myoblasts. In adults, participates in wound healing as well as organ regeneration and tissue remodeling. Also promotes differentiation and proliferation of hematopoietic cells. May regulate cortical bone osteogenesis. (Microbial infection) Acts as a receptor for Listeria monocytogenes internalin InlB, mediating entry of the pathogen into cells. The sequence is that of Hepatocyte growth factor receptor (Met) from Mus musculus (Mouse).